The sequence spans 677 residues: Vertnin (677 aa).

Disordered regions lie at residues G356 to E376 and H458 to P490. The span at H458–Q472 shows a compositional bias: basic and acidic residues.

Belongs to the vertnin family.

The protein localises to the nucleus. Functionally, functions as a transcriptional repressor that modulates bmp2b expression during dorsoventral patterning. This chain is Vertnin (vrtn), found in Danio rerio (Zebrafish).